A 348-amino-acid chain; its full sequence is NADH-quinone oxidoreductase subunit H (348 aa).

8 helical membrane-spanning segments follow: residues 10-30 (LPLF…LVLI), 82-102 (GVFL…WAVV), 115-135 (VGLL…IMGG), 161-181 (IGFV…TTIV), 199-219 (LLDW…ISAL), 251-271 (LFFL…TILF), 287-307 (VPGV…FAMV), and 322-342 (LGWK…AAIL).

The protein belongs to the complex I subunit 1 family. In terms of assembly, NDH-1 is composed of 14 different subunits. Subunits NuoA, H, J, K, L, M, N constitute the membrane sector of the complex.

It localises to the cell inner membrane. It catalyses the reaction a quinone + NADH + 5 H(+)(in) = a quinol + NAD(+) + 4 H(+)(out). In terms of biological role, NDH-1 shuttles electrons from NADH, via FMN and iron-sulfur (Fe-S) centers, to quinones in the respiratory chain. The immediate electron acceptor for the enzyme in this species is believed to be ubiquinone. Couples the redox reaction to proton translocation (for every two electrons transferred, four hydrogen ions are translocated across the cytoplasmic membrane), and thus conserves the redox energy in a proton gradient. This subunit may bind ubiquinone. In Bartonella bacilliformis (strain ATCC 35685 / KC583 / Herrer 020/F12,63), this protein is NADH-quinone oxidoreductase subunit H.